We begin with the raw amino-acid sequence, 317 residues long: ATP synthase gamma chain (317 aa).

Belongs to the ATPase gamma chain family. F-type ATPases have 2 components, CF(1) - the catalytic core - and CF(0) - the membrane proton channel. CF(1) has five subunits: alpha(3), beta(3), gamma(1), delta(1), epsilon(1). CF(0) has three main subunits: a, b and c.

It localises to the cellular thylakoid membrane. Its function is as follows. Produces ATP from ADP in the presence of a proton gradient across the membrane. The gamma chain is believed to be important in regulating ATPase activity and the flow of protons through the CF(0) complex. This chain is ATP synthase gamma chain, found in Synechococcus sp. (strain CC9902).